The primary structure comprises 236 residues: Eukaryotic translation initiation factor 3 subunit J (236 aa).

Disordered stretches follow at residues 1 to 88 and 188 to 236; these read MADD…LANM and SEKQ…DDFM. The span at 28-46 shows a compositional bias: acidic residues; that stretch reads GEDDDEDVKESWEDEEEKK. 3 stretches are compositionally biased toward basic and acidic residues: residues 47–58, 68–88, and 188–197; these read DEEKPTKTEAPV, AKLEEQERLNEEEERKRLANM, and SEKQKMEKAN. 2 coiled-coil regions span residues 61–112 and 174–209; these read KPNK…LKSA and ADIKKVKMSVESLHSEKQKMEKANAKKSAAKAKGKV. A compositionally biased stretch (basic residues) spans 201–210; that stretch reads SAAKAKGKVS.

The protein belongs to the eIF-3 subunit J family. As to quaternary structure, component of the eukaryotic translation initiation factor 3 (eIF-3) complex. The eIF-3 complex interacts with pix.

It is found in the cytoplasm. Component of the eukaryotic translation initiation factor 3 (eIF-3) complex, which is involved in protein synthesis of a specialized repertoire of mRNAs and, together with other initiation factors, stimulates binding of mRNA and methionyl-tRNAi to the 40S ribosome. The eIF-3 complex specifically targets and initiates translation of a subset of mRNAs involved in cell proliferation. The polypeptide is Eukaryotic translation initiation factor 3 subunit J (Drosophila virilis (Fruit fly)).